Consider the following 143-residue polypeptide: Large ribosomal subunit protein uL13 (143 aa).

Belongs to the universal ribosomal protein uL13 family. Part of the 50S ribosomal subunit.

This protein is one of the early assembly proteins of the 50S ribosomal subunit, although it is not seen to bind rRNA by itself. It is important during the early stages of 50S assembly. The chain is Large ribosomal subunit protein uL13 from Carboxydothermus hydrogenoformans (strain ATCC BAA-161 / DSM 6008 / Z-2901).